Here is a 442-residue protein sequence, read N- to C-terminus: 3-oxoacyl-[acyl-carrier-protein] synthase homolog (442 aa).

The region spanning 2–438 is the Ketosynthase family 3 (KS3) domain; the sequence is SRRVVITGLG…GVNTSLLFKK (437 aa). Active-site for beta-ketoacyl synthase activity residues include cysteine 187, histidine 322, and histidine 362.

The protein belongs to the thiolase-like superfamily. Beta-ketoacyl-ACP synthases family.

It is found in the mitochondrion. The catalysed reaction is a fatty acyl-[ACP] + malonyl-[ACP] + H(+) = a 3-oxoacyl-[ACP] + holo-[ACP] + CO2. Its function is as follows. Possibly involved in the synthesis of a specialized molecule, probably related to a fatty acid, which is essential for mitochondrial respiration. Is essential for oxygen uptake and the presence of cytochromes A and B. The protein is 3-oxoacyl-[acyl-carrier-protein] synthase homolog (CEM1) of Saccharomyces cerevisiae (strain ATCC 204508 / S288c) (Baker's yeast).